The sequence spans 1132 residues: Phycobiliprotein ApcE (1132 aa).

Cys196 contributes to the (2R,3E)-phycocyanobilin binding site. PBS-linker domains lie at Asp253 to Val433, Leu514 to Glu692, Pro709 to Asn887, and Gly940 to Ser1121.

Belongs to the phycobilisome linker protein family. As to quaternary structure, heterodimer of ApcF (a variant beta-allophycocyanin). Phycobilisomes of this organism are composed of a two cylinder core, from which six rods radiate. The core is mainly composed of allophycocyanin alpha and beta chains and of minor components. Post-translationally, contains one covalently linked bilin chromophore. This protein autochromophorylates.

The protein resides in the cellular thylakoid membrane. Functionally, this protein is postulated to act both as terminal energy acceptor (by its phycobilin-like domains) and as a linker polypeptide (by its repeats and arms) that stabilizes the phycobilisome core architecture. Has intrinsic bilin lyase activity. This is Phycobiliprotein ApcE (apcE) from Nostoc sp. (strain PCC 7120 / SAG 25.82 / UTEX 2576).